The following is a 176-amino-acid chain: NAD(P)H-quinone oxidoreductase subunit J (176 aa).

The tract at residues 1-32 (MEKEGLAKSSDTSIKKEGFISQSLSKDGIPNQ) is disordered. Residues 20–32 (ISQSLSKDGIPNQ) are compositionally biased toward polar residues.

It belongs to the complex I 30 kDa subunit family. As to quaternary structure, NDH-1 can be composed of about 15 different subunits; different subcomplexes with different compositions have been identified which probably have different functions.

It is found in the cellular thylakoid membrane. It catalyses the reaction a plastoquinone + NADH + (n+1) H(+)(in) = a plastoquinol + NAD(+) + n H(+)(out). The catalysed reaction is a plastoquinone + NADPH + (n+1) H(+)(in) = a plastoquinol + NADP(+) + n H(+)(out). NDH-1 shuttles electrons from an unknown electron donor, via FMN and iron-sulfur (Fe-S) centers, to quinones in the respiratory and/or the photosynthetic chain. The immediate electron acceptor for the enzyme in this species is believed to be plastoquinone. Couples the redox reaction to proton translocation, and thus conserves the redox energy in a proton gradient. Cyanobacterial NDH-1 also plays a role in inorganic carbon-concentration. This is NAD(P)H-quinone oxidoreductase subunit J from Prochlorococcus marinus (strain MIT 9215).